Here is a 303-residue protein sequence, read N- to C-terminus: S-methyl-5'-thioadenosine phosphorylase 1 (303 aa).

Phosphate-binding positions include S14, 57 to 58 (RH), and 90 to 91 (SA). M198 contributes to the substrate binding site. S199 serves as a coordination point for phosphate. 222 to 224 (DYD) provides a ligand contact to substrate.

The protein belongs to the PNP/MTAP phosphorylase family. MTAP subfamily. Homotrimer.

The protein localises to the cytoplasm. Its subcellular location is the nucleus. It carries out the reaction S-methyl-5'-thioadenosine + phosphate = 5-(methylsulfanyl)-alpha-D-ribose 1-phosphate + adenine. It participates in amino-acid biosynthesis; L-methionine biosynthesis via salvage pathway; S-methyl-5-thio-alpha-D-ribose 1-phosphate from S-methyl-5'-thioadenosine (phosphorylase route): step 1/1. Functionally, catalyzes the reversible phosphorylation of S-methyl-5'-thioadenosine (MTA) to adenine and 5-methylthioribose-1-phosphate. Involved in the breakdown of MTA, a major by-product of polyamine biosynthesis. Responsible for the first step in the methionine salvage pathway after MTA has been generated from S-adenosylmethionine. Has broad substrate specificity with 6-aminopurine nucleosides as preferred substrates. This is S-methyl-5'-thioadenosine phosphorylase 1 from Puccinia graminis f. sp. tritici (strain CRL 75-36-700-3 / race SCCL) (Black stem rust fungus).